Reading from the N-terminus, the 190-residue chain is Probable E3 ubiquitin-protein ligase RHB1A (190 aa).

The RING-type; atypical zinc finger occupies Cys-139–Asp-180.

The enzyme catalyses S-ubiquitinyl-[E2 ubiquitin-conjugating enzyme]-L-cysteine + [acceptor protein]-L-lysine = [E2 ubiquitin-conjugating enzyme]-L-cysteine + N(6)-ubiquitinyl-[acceptor protein]-L-lysine.. The protein operates within protein modification; protein ubiquitination. In terms of biological role, probable E3 ubiquitin-protein ligase that may possess E3 ubiquitin ligase activity in vitro. The protein is Probable E3 ubiquitin-protein ligase RHB1A of Arabidopsis thaliana (Mouse-ear cress).